Reading from the N-terminus, the 346-residue chain is Methylthioribose-1-phosphate isomerase (346 aa).

Residues 44–46 (RGA), Arg-87, and Gln-194 each bind substrate. The active-site Proton donor is Asp-235. 245 to 246 (NK) contributes to the substrate binding site.

The protein belongs to the eIF-2B alpha/beta/delta subunits family. MtnA subfamily.

The catalysed reaction is 5-(methylsulfanyl)-alpha-D-ribose 1-phosphate = 5-(methylsulfanyl)-D-ribulose 1-phosphate. It functions in the pathway amino-acid biosynthesis; L-methionine biosynthesis via salvage pathway; L-methionine from S-methyl-5-thio-alpha-D-ribose 1-phosphate: step 1/6. Catalyzes the interconversion of methylthioribose-1-phosphate (MTR-1-P) into methylthioribulose-1-phosphate (MTRu-1-P). This chain is Methylthioribose-1-phosphate isomerase, found in Desulforamulus reducens (strain ATCC BAA-1160 / DSM 100696 / MI-1) (Desulfotomaculum reducens).